The primary structure comprises 436 residues: Ribosomal protein uS12 methylthiotransferase RimO (436 aa).

Positions 4–122 (KRIDIITLGC…LLQDLGKTYH (119 aa)) constitute an MTTase N-terminal domain. Residues Cys13, Cys51, Cys85, Cys146, Cys150, and Cys153 each contribute to the [4Fe-4S] cluster site. The region spanning 132-363 (TTPKHYAYLK…MDIQQGISAE (232 aa)) is the Radical SAM core domain. Residues 366-433 (AAKIGQQMKV…DFDLYAKILN (68 aa)) enclose the TRAM domain.

Belongs to the methylthiotransferase family. RimO subfamily. Requires [4Fe-4S] cluster as cofactor.

It is found in the cytoplasm. It catalyses the reaction L-aspartate(89)-[ribosomal protein uS12]-hydrogen + (sulfur carrier)-SH + AH2 + 2 S-adenosyl-L-methionine = 3-methylsulfanyl-L-aspartate(89)-[ribosomal protein uS12]-hydrogen + (sulfur carrier)-H + 5'-deoxyadenosine + L-methionine + A + S-adenosyl-L-homocysteine + 2 H(+). Functionally, catalyzes the methylthiolation of an aspartic acid residue of ribosomal protein uS12. The protein is Ribosomal protein uS12 methylthiotransferase RimO of Bacteroides thetaiotaomicron (strain ATCC 29148 / DSM 2079 / JCM 5827 / CCUG 10774 / NCTC 10582 / VPI-5482 / E50).